A 1238-amino-acid polypeptide reads, in one-letter code: Inner capsid protein VP2 (1238 aa).

Residues 1-35 (MSTSAKKTPESKTEDKIEPVIEQTSNDKPEPPPNK) form a disordered region. Positions 7–30 (KTPESKTEDKIEPVIEQTSNDKPE) are enriched in basic and acidic residues.

The protein belongs to the turreted BTV-fold inner capsid family. As to quaternary structure, homodecamer; each decamer is made up of two conformers of VP2, called VP2A and VP2B. 12 homodecamers assemble to form an icosahedral capsid.

It localises to the virion. Functionally, inner capsid protein that self-assembles to form an icosahedral capsid with a T=2 symmetry, which consists of 120 copies of VP2, with channels at each of its five-fold vertices. This capsid constitutes the innermost concentric layer of the viral mature particle. The sequence is that of Inner capsid protein VP2 (S2) from Cryphonectria parasitica (Chestnut blight fungus).